A 362-amino-acid chain; its full sequence is Thiol protease aleurain (362 aa).

An N-terminal signal peptide occupies residues 1 to 22 (MAHARVLLLALAVLATAAVAVA). The propeptide at 23–143 (SSSSFADSNP…GNHLMRDAAA (121 aa)) is activation peptide. 2 disulfides stabilise this stretch: cysteine 165–cysteine 208 and cysteine 199–cysteine 241. The active site involves cysteine 168. Residue asparagine 188 is glycosylated (N-linked (GlcNAc...) asparagine). Asparagine 257 carries N-linked (GlcNAc...) asparagine glycosylation. The cysteines at positions 299 and 349 are disulfide-linked. Catalysis depends on residues histidine 308 and asparagine 328.

It belongs to the peptidase C1 family.

The protein localises to the vacuole. The enzyme catalyses Hydrolysis of proteins, acting as an aminopeptidase (notably, cleaving Arg-|-Xaa bonds) as well as an endopeptidase.. In terms of biological role, may play a role in proteolysis leading to mobilization of nitrogen during senescence and starvation. The chain is Thiol protease aleurain from Hordeum vulgare (Barley).